The sequence spans 226 residues: 2-C-methyl-D-erythritol 4-phosphate cytidylyltransferase (226 aa).

Belongs to the IspD/TarI cytidylyltransferase family. IspD subfamily.

The enzyme catalyses 2-C-methyl-D-erythritol 4-phosphate + CTP + H(+) = 4-CDP-2-C-methyl-D-erythritol + diphosphate. It functions in the pathway isoprenoid biosynthesis; isopentenyl diphosphate biosynthesis via DXP pathway; isopentenyl diphosphate from 1-deoxy-D-xylulose 5-phosphate: step 2/6. Its function is as follows. Catalyzes the formation of 4-diphosphocytidyl-2-C-methyl-D-erythritol from CTP and 2-C-methyl-D-erythritol 4-phosphate (MEP). In Bacillus cytotoxicus (strain DSM 22905 / CIP 110041 / 391-98 / NVH 391-98), this protein is 2-C-methyl-D-erythritol 4-phosphate cytidylyltransferase.